The sequence spans 650 residues: Chaperone protein HtpG (650 aa).

The interval 1–349 is a; substrate-binding; the sequence is MTKTTKKFET…SSDLPLNVSR (349 aa). The segment at 350–566 is b; the sequence is EILQEDVQIK…EHGLNANMER (217 aa). The tract at residues 567–650 is c; the sequence is ILRAMNQDVP…VADGKAAAGE (84 aa).

The protein belongs to the heat shock protein 90 family. As to quaternary structure, homodimer.

Its subcellular location is the cytoplasm. In terms of biological role, molecular chaperone. Has ATPase activity. The chain is Chaperone protein HtpG from Geobacter metallireducens (strain ATCC 53774 / DSM 7210 / GS-15).